Here is a 274-residue protein sequence, read N- to C-terminus: 2,3,4,5-tetrahydropyridine-2,6-dicarboxylate N-succinyltransferase (274 aa).

The substrate site is built by R104 and D141.

It belongs to the transferase hexapeptide repeat family. Homotrimer.

The protein resides in the cytoplasm. It catalyses the reaction (S)-2,3,4,5-tetrahydrodipicolinate + succinyl-CoA + H2O = (S)-2-succinylamino-6-oxoheptanedioate + CoA. The protein operates within amino-acid biosynthesis; L-lysine biosynthesis via DAP pathway; LL-2,6-diaminopimelate from (S)-tetrahydrodipicolinate (succinylase route): step 1/3. The sequence is that of 2,3,4,5-tetrahydropyridine-2,6-dicarboxylate N-succinyltransferase from Escherichia coli O139:H28 (strain E24377A / ETEC).